Here is a 249-residue protein sequence, read N- to C-terminus: Methyl-coenzyme M reductase I subunit gamma (249 aa).

Position 120 (Arg120) interacts with coenzyme M.

Belongs to the methyl-coenzyme M reductase gamma subunit family. In terms of assembly, MCR is a hexamer of two alpha, two beta, and two gamma chains, forming a dimer of heterotrimers. The cofactor is coenzyme F430.

The protein resides in the cytoplasm. It carries out the reaction coenzyme B + methyl-coenzyme M = methane + coenzyme M-coenzyme B heterodisulfide. The protein operates within one-carbon metabolism; methyl-coenzyme M reduction; methane from methyl-coenzyme M: step 1/1. Methyl-coenzyme M reductase activity is inhibited by 3-nitrooxypropanol (3-NOP) in vitro and in vivo, by oxidation of its active site Ni(I), which stops both growth and methanogenesis. Is also inhibited by the reaction product CoM-S-S-CoB. Component of the methyl-coenzyme M reductase (MCR) I that catalyzes the reductive cleavage of methyl-coenzyme M (CoM-S-CH3 or 2-(methylthio)ethanesulfonate) using coenzyme B (CoB or 7-mercaptoheptanoylthreonine phosphate) as reductant which results in the production of methane and the mixed heterodisulfide of CoB and CoM (CoM-S-S-CoB). This is the final step in methanogenesis. Neither N-6-mercaptohexanoylthreonine phosphate (H-S-HxoTP) nor N-8-mercaptooctanoylthreonine phosphate (H-SOcoTP) nor any other thiol compound such as CoA or CoM can substitute for CoB as the electron donor. This is Methyl-coenzyme M reductase I subunit gamma (mcrG) from Methanothermobacter marburgensis (strain ATCC BAA-927 / DSM 2133 / JCM 14651 / NBRC 100331 / OCM 82 / Marburg) (Methanobacterium thermoautotrophicum).